The primary structure comprises 308 residues: Probable GTP 3',8-cyclase (308 aa).

One can recognise a Radical SAM core domain in the interval 4–222 (RFGRPLEDLR…KKLIRKKHFR (219 aa)). A GTP-binding site is contributed by R13. Positions 20, 24, and 27 each coordinate [4Fe-4S] cluster. K60 contributes to the GTP binding site. G64 is a binding site for S-adenosyl-L-methionine. T90 contributes to the GTP binding site. Residue S114 coordinates S-adenosyl-L-methionine. K151 contacts GTP. 2 residues coordinate [4Fe-4S] cluster: C245 and C248. Position 250–252 (250–252 (RIR)) interacts with GTP. Residue C262 coordinates [4Fe-4S] cluster.

Belongs to the radical SAM superfamily. MoaA family. [4Fe-4S] cluster serves as cofactor.

The catalysed reaction is GTP + AH2 + S-adenosyl-L-methionine = (8S)-3',8-cyclo-7,8-dihydroguanosine 5'-triphosphate + 5'-deoxyadenosine + L-methionine + A + H(+). Its pathway is cofactor biosynthesis; molybdopterin biosynthesis. Catalyzes the cyclization of GTP to (8S)-3',8-cyclo-7,8-dihydroguanosine 5'-triphosphate. The chain is Probable GTP 3',8-cyclase from Saccharolobus solfataricus (strain ATCC 35092 / DSM 1617 / JCM 11322 / P2) (Sulfolobus solfataricus).